Reading from the N-terminus, the 274-residue chain is ATP synthase subunit delta (274 aa).

This sequence belongs to the ATPase delta chain family. In terms of assembly, F-type ATPases have 2 components, F(1) - the catalytic core - and F(0) - the membrane proton channel. F(1) has five subunits: alpha(3), beta(3), gamma(1), delta(1), epsilon(1). F(0) has three main subunits: a(1), b(2) and c(10-14). The alpha and beta chains form an alternating ring which encloses part of the gamma chain. F(1) is attached to F(0) by a central stalk formed by the gamma and epsilon chains, while a peripheral stalk is formed by the delta and b chains.

The protein localises to the cell membrane. Functionally, f(1)F(0) ATP synthase produces ATP from ADP in the presence of a proton or sodium gradient. F-type ATPases consist of two structural domains, F(1) containing the extramembraneous catalytic core and F(0) containing the membrane proton channel, linked together by a central stalk and a peripheral stalk. During catalysis, ATP synthesis in the catalytic domain of F(1) is coupled via a rotary mechanism of the central stalk subunits to proton translocation. This protein is part of the stalk that links CF(0) to CF(1). It either transmits conformational changes from CF(0) to CF(1) or is implicated in proton conduction. The chain is ATP synthase subunit delta from Corynebacterium efficiens (strain DSM 44549 / YS-314 / AJ 12310 / JCM 11189 / NBRC 100395).